A 1350-amino-acid polypeptide reads, in one-letter code: Probable serine/threonine-protein kinase DDB_G0278845 (1350 aa).

8 disordered regions span residues arginine 66–arginine 109, glutamate 121–leucine 159, leucine 179–isoleucine 249, serine 270–serine 296, asparagine 337–leucine 396, glycine 431–lysine 506, asparagine 525–proline 596, and asparagine 612–glutamate 701. Over residues lysine 84 to aspartate 98 the composition is skewed to polar residues. Composition is skewed to low complexity over residues serine 127–threonine 140 and asparagine 181–asparagine 210. Positions lysine 211 to threonine 222 are enriched in polar residues. A compositionally biased stretch (low complexity) spans aspartate 223–asparagine 235. Acidic residues predominate over residues aspartate 236–leucine 246. Low complexity-rich tracts occupy residues serine 270–asparagine 293 and asparagine 337–asparagine 391. A compositionally biased stretch (polar residues) spans glycine 431–alanine 443. The segment covering asparagine 454–asparagine 482 has biased composition (acidic residues). Composition is skewed to low complexity over residues aspartate 483–serine 495 and asparagine 525–proline 551. Positions proline 565 to lysine 592 are enriched in polar residues. Composition is skewed to low complexity over residues asparagine 612–aspartate 637, asparagine 645–asparagine 679, and lysine 690–glutamate 701. Positions phenylalanine 756–phenylalanine 1082 constitute a Protein kinase domain. Residues isoleucine 762–valine 770 and lysine 785 each bind ATP. The Proton acceptor role is filled by aspartate 880. Residues asparagine 1083–tryptophan 1203 enclose the AGC-kinase C-terminal domain. Disordered stretches follow at residues serine 1129 to methionine 1159, glycine 1190 to asparagine 1219, asparagine 1232 to valine 1285, and asparagine 1300 to glutamine 1350. A compositionally biased stretch (pro residues) spans leucine 1131–proline 1142. Low complexity-rich tracts occupy residues asparagine 1204–asparagine 1219, asparagine 1232–lysine 1283, and asparagine 1300–asparagine 1313. Composition is skewed to polar residues over residues threonine 1314–asparagine 1330 and proline 1338–glutamine 1350.

This sequence belongs to the protein kinase superfamily. AGC Ser/Thr protein kinase family.

The enzyme catalyses L-seryl-[protein] + ATP = O-phospho-L-seryl-[protein] + ADP + H(+). It catalyses the reaction L-threonyl-[protein] + ATP = O-phospho-L-threonyl-[protein] + ADP + H(+). The sequence is that of Probable serine/threonine-protein kinase DDB_G0278845 from Dictyostelium discoideum (Social amoeba).